A 266-amino-acid polypeptide reads, in one-letter code: UPF0354 protein lin1649 (266 aa).

The protein belongs to the UPF0354 family.

This chain is UPF0354 protein lin1649, found in Listeria innocua serovar 6a (strain ATCC BAA-680 / CLIP 11262).